The primary structure comprises 189 residues: Peptidyl-tRNA hydrolase (189 aa).

Residue Tyr15 participates in tRNA binding. The Proton acceptor role is filled by His20. Residues Phe66, Asn68, and Asn114 each coordinate tRNA.

It belongs to the PTH family. In terms of assembly, monomer.

It is found in the cytoplasm. The enzyme catalyses an N-acyl-L-alpha-aminoacyl-tRNA + H2O = an N-acyl-L-amino acid + a tRNA + H(+). Functionally, hydrolyzes ribosome-free peptidyl-tRNAs (with 1 or more amino acids incorporated), which drop off the ribosome during protein synthesis, or as a result of ribosome stalling. Catalyzes the release of premature peptidyl moieties from peptidyl-tRNA molecules trapped in stalled 50S ribosomal subunits, and thus maintains levels of free tRNAs and 50S ribosomes. The chain is Peptidyl-tRNA hydrolase from Streptococcus pneumoniae serotype 2 (strain D39 / NCTC 7466).